The sequence spans 607 residues: Elongation factor 4 (607 aa).

Positions Glu11 to Asp193 constitute a tr-type G domain. GTP-binding positions include Asp23–Thr28 and Asn140–Asp143.

The protein belongs to the TRAFAC class translation factor GTPase superfamily. Classic translation factor GTPase family. LepA subfamily.

The protein localises to the cell membrane. The enzyme catalyses GTP + H2O = GDP + phosphate + H(+). Its function is as follows. Required for accurate and efficient protein synthesis under certain stress conditions. May act as a fidelity factor of the translation reaction, by catalyzing a one-codon backward translocation of tRNAs on improperly translocated ribosomes. Back-translocation proceeds from a post-translocation (POST) complex to a pre-translocation (PRE) complex, thus giving elongation factor G a second chance to translocate the tRNAs correctly. Binds to ribosomes in a GTP-dependent manner. This Staphylococcus aureus (strain USA300) protein is Elongation factor 4.